Here is a 256-residue protein sequence, read N- to C-terminus: Imidazole glycerol phosphate synthase subunit HisF (256 aa).

Catalysis depends on residues D12 and D131.

Belongs to the HisA/HisF family. As to quaternary structure, heterodimer of HisH and HisF.

It is found in the cytoplasm. The enzyme catalyses 5-[(5-phospho-1-deoxy-D-ribulos-1-ylimino)methylamino]-1-(5-phospho-beta-D-ribosyl)imidazole-4-carboxamide + L-glutamine = D-erythro-1-(imidazol-4-yl)glycerol 3-phosphate + 5-amino-1-(5-phospho-beta-D-ribosyl)imidazole-4-carboxamide + L-glutamate + H(+). It functions in the pathway amino-acid biosynthesis; L-histidine biosynthesis; L-histidine from 5-phospho-alpha-D-ribose 1-diphosphate: step 5/9. Functionally, IGPS catalyzes the conversion of PRFAR and glutamine to IGP, AICAR and glutamate. The HisF subunit catalyzes the cyclization activity that produces IGP and AICAR from PRFAR using the ammonia provided by the HisH subunit. The chain is Imidazole glycerol phosphate synthase subunit HisF from Bifidobacterium adolescentis (strain ATCC 15703 / DSM 20083 / NCTC 11814 / E194a).